We begin with the raw amino-acid sequence, 660 residues long: Pro-secreted protein ORF2 (660 aa).

A signal peptide spans 1 to 23 (MRPRAVLLLLFVLLPMLPAPPAG). Disordered stretches follow at residues 19–43 (APPAGQPSGRRRGRRNGGAGGGFWG) and 64–125 (ADVV…VPDV). A Nuclear localization signal motif is present at residues 28–33 (RRRGRR). The segment covering 93–124 (RPSTAPRRRSAPAGAAPLTAVSPAPDTAPVPD) has biased composition (low complexity). 2 N-linked (GlcNAc...) asparagine; by host glycosylation sites follow: N137 and N310. Positions 368–394 (IALTLFNLADTLLGGLPTELISSAGGQ) are particle formation. N-linked (GlcNAc...) asparagine; by host glycosylation is present at N562. The segment at 585 to 610 (TTSLGAGPTSISAVGVLAPHSALAVL) is oligomerization.

Belongs to the hepevirus capsid protein family. In terms of assembly, homodimer. Self-assembles to form the capsid. The capsid is dominated by dimers that define the 30 morphological units. Interacts with phosphorylated protein ORF3. Interacts with host TMEM134. Interacts with host ASGR1 and ASGR2; these interactions facilitate infection of host hepatocytes. Post-translationally, cleaved by host protease in the N-terminus. In terms of processing, N-glycosylated. Not N-glycosylated. The C-terminus of the capsid protein ORF2 is truncated in non-enveloped virions shedded in feces, probably due to host proteases.

It is found in the secreted. It localises to the virion. Its subcellular location is the host cytoplasm. The protein resides in the host endoplasmic reticulum. The protein localises to the host Golgi apparatus. It is found in the host cell surface. It localises to the host nucleus. Functionally, plays a role in the inhibition of host antibody-mediated neutralization without blocking viral cell entry. Forms an icosahedral capsid with a T=1 symmetry and a 34 nm diameter. The capsid is composed of 60 copies linked to each other. Binds to the 5' end of the genomic RNA to mediate genome encapsidation. Binds to heparin surface proteoglycans (HSPGs) to mediate viral entry. Additionally, the interactions with host ASGR1 and ASGR2 facilitate viral infection of hepatocytes. Inhibits IFN production by blocking host TBK1-induced IRF3 phosphorylation. The nuclear form probably modulates host gene expression. This chain is Pro-secreted protein ORF2, found in Hepatitis E virus genotype 3 (isolate Swine/United States/swUS1) (HEV-3).